A 117-amino-acid polypeptide reads, in one-letter code: Large ribosomal subunit protein uL24 (117 aa).

Belongs to the universal ribosomal protein uL24 family. As to quaternary structure, part of the 50S ribosomal subunit.

One of two assembly initiator proteins, it binds directly to the 5'-end of the 23S rRNA, where it nucleates assembly of the 50S subunit. Its function is as follows. Located at the polypeptide exit tunnel on the outside of the subunit. This Methanothermobacter thermautotrophicus (strain ATCC 29096 / DSM 1053 / JCM 10044 / NBRC 100330 / Delta H) (Methanobacterium thermoautotrophicum) protein is Large ribosomal subunit protein uL24.